The following is a 613-amino-acid chain: DNA mismatch repair protein MutL (613 aa).

Belongs to the DNA mismatch repair MutL/HexB family.

Its function is as follows. This protein is involved in the repair of mismatches in DNA. It is required for dam-dependent methyl-directed DNA mismatch repair. May act as a 'molecular matchmaker', a protein that promotes the formation of a stable complex between two or more DNA-binding proteins in an ATP-dependent manner without itself being part of a final effector complex. This Bradyrhizobium sp. (strain ORS 278) protein is DNA mismatch repair protein MutL.